The chain runs to 531 residues: Squalene epoxidase 1 (531 aa).

The chain crosses the membrane as a helical span at residues 9 to 29; the sequence is ILPLLISSLLISFVAFYGFFV. FAD contacts are provided by residues 70-71, 90-91, R98, R169, V185, D347, and M360; these read VA and ER. The next 2 helical transmembrane spans lie at 458–478 and 483–503; these read LVCH…IPFP and IWLG…IIKA.

It belongs to the squalene monooxygenase family. FAD serves as cofactor. As to expression, expressed in seedlings, leaves, stems, inflorescences, sepals, style and siliques. Expressed in expanded cotyledons, root tips and cortical cells of the root elongation zone, but not in root hair cells. In leaves, expressed in most cells, with a very strong expression in stomata.

It localises to the membrane. The catalysed reaction is squalene + reduced [NADPH--hemoprotein reductase] + O2 = (S)-2,3-epoxysqualene + oxidized [NADPH--hemoprotein reductase] + H2O + H(+). Its pathway is terpene metabolism; lanosterol biosynthesis; lanosterol from farnesyl diphosphate: step 2/3. Functionally, catalyzes the stereospecific oxidation of squalene to (S)-2,3-epoxysqualene, and is considered to be a rate-limiting enzyme in steroid biosynthesis. Can produce not only oxidosqualene, but also 2,3:22,23-dioxidosqualene. Main squalene epoxidase in the root. Sqe1 mutants may show defects in membrane lipid rafts, impairing the correct localization of RHD2 NADPH oxidase and the proper polarized production of ROS. In Arabidopsis thaliana (Mouse-ear cress), this protein is Squalene epoxidase 1 (SQE1).